We begin with the raw amino-acid sequence, 107 residues long: Replication initiation control protein YabA (107 aa).

Residues histidine 81, cysteine 83, cysteine 97, and cysteine 100 each coordinate Zn(2+).

It belongs to the YabA family. As to quaternary structure, homotetramer. Interacts with both DnaA and DnaN, acting as a bridge between these two proteins. The cofactor is Zn(2+).

It localises to the cytoplasm. The protein resides in the nucleoid. Functionally, involved in control of chromosome replication initiation. Inhibits the cooperative binding of DnaA to the oriC region, thus negatively regulating initiation of chromosome replication. Inhibits the ability of DnaA-ATP to form a helix on DNA; does not disassemble preformed DnaA-DNA helices. Decreases the residence time of DnaA on the chromosome at its binding sites (oriC, replication forks and promoter-binding sites). Tethers DnaA to the replication machinery via the DNA polymerase beta sliding clamp subunit (dnaN). Associates with oriC and other DnaA targets on the chromosome in a DnaA-dependent manner. This chain is Replication initiation control protein YabA, found in Streptococcus equi subsp. equi (strain 4047).